The chain runs to 701 residues: MNPVIKKFQFGQSTVTLETGRIARQASGAVLVTVDDDVSVLVTVVGAKQADAGKGFFPLSVHYQEKTYAAGKIPGGFFKREGRPSEKETLTSRLIDRPIRPLFPEGFMNEVQVVCTVVSTSKKIDPDIAAMIGTSAALAISGIPFDGPVGAARVAFHESTGYLLNPTYEQLQASSLDMVVAGTSEAVLMVESEAKELTEDQMLGAVLFAHDEFQVVINAIKELAAEAAKPTWDWQPKPEATALLGAIRAEFGDAISQAYTITVKADRYARLGELKDQVVAKLAVEDGSPSASEVKAAFGEIEYRTVRENIVNGKPRIDGRDTRTVRPLNIEVGVLPKTHGSALFTRGETQALVVATLGTARDAQLLDTLEGEKKDPFMLHYNFPPFSVGECGRMGGAGRREIGHGRLARRSVQAMLPGADVFPYTIRVVSEITESNGSSSMASVCGASLALMDAGVPMKAPVAGIAMGLVKEGEKFAILTDILGDEDHLGDMDFKVAGTSKGVTALQMDIKIKGITEEIMEIALGQALEARLNILGQMNQIIGQSRNELSANAPTMIAMKIDTDKIRDVIGKGGATIRAICEETKASIDIEDDGSIKIFGESKEAAEAARQRVLGITAEAEIGKIYIGKVERIVDFGAFVNILPGKDGLVHISMLSDARVEKVTDILKEGQEVEVLVLDVDNRGRIKLSIKDVAAAKASGV.

Aspartate 487 and aspartate 493 together coordinate Mg(2+). The KH domain occupies 554 to 613 (PTMIAMKIDTDKIRDVIGKGGATIRAICEETKASIDIEDDGSIKIFGESKEAAEAARQRV). The region spanning 623–691 (GKIYIGKVER…NRGRIKLSIK (69 aa)) is the S1 motif domain.

Belongs to the polyribonucleotide nucleotidyltransferase family. Component of the RNA degradosome, which is a multiprotein complex involved in RNA processing and mRNA degradation. The cofactor is Mg(2+).

It is found in the cytoplasm. The enzyme catalyses RNA(n+1) + phosphate = RNA(n) + a ribonucleoside 5'-diphosphate. Involved in mRNA degradation. Catalyzes the phosphorolysis of single-stranded polyribonucleotides processively in the 3'- to 5'-direction. The polypeptide is Polyribonucleotide nucleotidyltransferase (Pseudomonas syringae pv. syringae (strain B728a)).